The following is a 232-amino-acid chain: Large ribosomal subunit protein uL1 (232 aa).

This sequence belongs to the universal ribosomal protein uL1 family. In terms of assembly, part of the 50S ribosomal subunit.

In terms of biological role, binds directly to 23S rRNA. The L1 stalk is quite mobile in the ribosome, and is involved in E site tRNA release. Its function is as follows. Protein L1 is also a translational repressor protein, it controls the translation of the L11 operon by binding to its mRNA. The polypeptide is Large ribosomal subunit protein uL1 (Bacillus pumilus (strain SAFR-032)).